The sequence spans 2027 residues: Dedicator of cytokinesis protein 3 (2027 aa).

The region spanning 6 to 67 is the SH3 domain; sequence EEEKYGVVIC…PANYIHLKKA (62 aa). In terms of domain architecture, C2 DOCK-type spans 421–598; that stretch reads RNDLYLTLEK…ESFFISTQLS (178 aa). In terms of domain architecture, DOCKER spans 1225–1632; that stretch reads KSEINKEEMY…LYHEFPGLDK (408 aa). Serine 1655 carries the phosphoserine modification. Disordered regions lie at residues 1672–1695, 1731–1768, 1846–1925, and 1971–2027; these read GTGR…MMMM, SSSQ…SLPD, DTPP…DEGL, and PPKP…RGEQ. 2 stretches are compositionally biased toward low complexity: residues 1676–1695 and 1731–1751; these read HSSS…MMMM and SSSQ…APSQ. The span at 1752–1763 shows a compositional bias: polar residues; it reads MITSAPSSTRGS. The segment covering 1877–1899 has biased composition (low complexity); sequence GSNSTLSGSASSGVSSLSESNFG. Positions 1967–1973 match the SH3-binding motif; that stretch reads PPALPPK. 2 stretches are compositionally biased toward basic and acidic residues: residues 1981–1998 and 2011–2027; these read ALEH…ERPR and VKEE…RGEQ.

It belongs to the DOCK family. As to quaternary structure, interacts with presenilin proteins PSEN1 and PSEN2. Interacts with CRK. In terms of tissue distribution, expressed in brain, spinal cord, pituitary gland, testis. Not expressed in heart, liver, kidney, spleen and lung. In brain, it is highly expressed in the cerebral cortex and hippocampus, while it is absent in other tissues, except in spinal cord. In the cerebral cortex, it is found within the intermediate (III and IV) and deep (V and VI) layers, whereas it is weakly expressed in superficial layer I. It is also abundant in the piriform cortex. Within the hippocampus, it is expressed in the pyramidal neurons of the CA1, CA2, and CA3 regions and the dentate gyrus.

It localises to the cytoplasm. Potential guanine nucleotide exchange factor (GEF). GEF proteins activate some small GTPases by exchanging bound GDP for free GTP. Its interaction with presenilin proteins as well as its ability to stimulate Tau/MAPT phosphorylation suggest that it may be involved in Alzheimer disease. Ectopic expression in nerve cells decreases the secretion of amyloid-beta APBA1 protein and lowers the rate of cell-substratum adhesion, suggesting that it may affect the function of some small GTPase involved in the regulation of actin cytoskeleton or cell adhesion receptors. The polypeptide is Dedicator of cytokinesis protein 3 (Dock3) (Mus musculus (Mouse)).